Reading from the N-terminus, the 666-residue chain is MKQYAIQPATLEFNAEGTPVSRDFDDVYFSNDNGLEETRYVFLGGNRLAERFPVHSHPLFIVAESGFGTGLNFLTLWQAFDSFRSAHPQATLQRLHFISFEKFPLTRDDLALAHQHWPELAPWAEQLQAQWPLPLPGCHRLLLDRGRVTLDLWFGDINELTDQLDATLNQTVDAWFLDGFAPAKNPDMWTPNLFNAMARLARPGATLATFTSAGFVRRGLQEAGFTMQKHKGFGRKREMLCGVMEQHLMPTLSAPWFYCSGSEKRETAIIGGGIASALLSLALLRRGWQVTLYCADDQPAQGASGNRQGALYPLLSKHDAAINRFFPTAFTFARRLYDALPVSFDHAWCGVTQLGWDEKSQQKIAQMLSLALPAGLASALNAEEAEQAVGVTTRCGGITYPAGGWLCPEQLTRAVIALATEQGLQTRFRHTLTSLVAQESRWQLRFTSGETASHETVVLANGHQINRFDQTRPLPVYAVGGQVSHIPTTPALSALRQVLCYDGYLTPQNPHNQQHCIGASYHRGDESTVWREEDQRQNRQRLLDCFPDANWATEVDVSGNSARCGVRCATRDHLPMVGNVPDYHATLTHYADLADNKTSAASAPVYPGLFMLGALGSRGLCSAPLCAEILAAQMSNEPIPLDAGTLAALNPNRLWVRKLLKGKAVK.

A tRNA (mnm(5)s(2)U34)-methyltransferase region spans residues 1–245 (MKQYAIQPAT…KREMLCGVME (245 aa)). An FAD-dependent cmnm(5)s(2)U34 oxidoreductase region spans residues 270-666 (IGGGIASALL…RKLLKGKAVK (397 aa)).

It in the N-terminal section; belongs to the methyltransferase superfamily. tRNA (mnm(5)s(2)U34)-methyltransferase family. The protein in the C-terminal section; belongs to the DAO family. Requires FAD as cofactor.

Its subcellular location is the cytoplasm. It carries out the reaction 5-aminomethyl-2-thiouridine(34) in tRNA + S-adenosyl-L-methionine = 5-methylaminomethyl-2-thiouridine(34) in tRNA + S-adenosyl-L-homocysteine + H(+). Its function is as follows. Catalyzes the last two steps in the biosynthesis of 5-methylaminomethyl-2-thiouridine (mnm(5)s(2)U) at the wobble position (U34) in tRNA. Catalyzes the FAD-dependent demodification of cmnm(5)s(2)U34 to nm(5)s(2)U34, followed by the transfer of a methyl group from S-adenosyl-L-methionine to nm(5)s(2)U34, to form mnm(5)s(2)U34. This chain is tRNA 5-methylaminomethyl-2-thiouridine biosynthesis bifunctional protein MnmC, found in Salmonella typhi.